Reading from the N-terminus, the 82-residue chain is Sulfur carrier protein TusA (82 aa).

Cys20 acts as the Cysteine persulfide intermediate in catalysis.

It belongs to the sulfur carrier protein TusA family.

The protein localises to the cytoplasm. Sulfur carrier protein which probably makes part of a sulfur-relay system. The chain is Sulfur carrier protein TusA from Aeromonas hydrophila subsp. hydrophila (strain ATCC 7966 / DSM 30187 / BCRC 13018 / CCUG 14551 / JCM 1027 / KCTC 2358 / NCIMB 9240 / NCTC 8049).